The following is a 62-amino-acid chain: Photosystem II reaction center protein Z (62 aa).

The next 2 membrane-spanning stretches (helical) occupy residues 8–28 (LVLLLITLSTILVVGVPVVLA) and 41–61 (YTGAGLWTGLVIVTSLVNSLV).

It belongs to the PsbZ family. PSII is composed of 1 copy each of membrane proteins PsbA, PsbB, PsbC, PsbD, PsbE, PsbF, PsbH, PsbI, PsbJ, PsbK, PsbL, PsbM, PsbT, PsbX, PsbY, PsbZ, Psb30/Ycf12, at least 3 peripheral proteins of the oxygen-evolving complex and a large number of cofactors. It forms dimeric complexes.

The protein localises to the plastid. It localises to the chloroplast thylakoid membrane. In terms of biological role, may control the interaction of photosystem II (PSII) cores with the light-harvesting antenna, regulates electron flow through the 2 photosystem reaction centers. PSII is a light-driven water plastoquinone oxidoreductase, using light energy to abstract electrons from H(2)O, generating a proton gradient subsequently used for ATP formation. This is Photosystem II reaction center protein Z from Porphyra purpurea (Red seaweed).